Reading from the N-terminus, the 85-residue chain is Large ribosomal subunit protein bL27 (85 aa).

Positions 1–22 (MAHKKAGGSTNNGRDSESKRLG) are disordered.

It belongs to the bacterial ribosomal protein bL27 family.

The chain is Large ribosomal subunit protein bL27 from Photobacterium profundum (strain SS9).